The sequence spans 185 residues: ATP synthase subunit b 2 (185 aa).

Positions 1–26 (MAQGHGDAKGTTAHTEAGGGHKAPFP) are disordered. The chain crosses the membrane as a helical span at residues 37–57 (LVSLAIAFVALYLIVSKIALP).

The protein belongs to the ATPase B chain family. As to quaternary structure, F-type ATPases have 2 components, F(1) - the catalytic core - and F(0) - the membrane proton channel. F(1) has five subunits: alpha(3), beta(3), gamma(1), delta(1), epsilon(1). F(0) has three main subunits: a(1), b(2) and c(10-14). The alpha and beta chains form an alternating ring which encloses part of the gamma chain. F(1) is attached to F(0) by a central stalk formed by the gamma and epsilon chains, while a peripheral stalk is formed by the delta and b chains.

The protein localises to the cell inner membrane. F(1)F(0) ATP synthase produces ATP from ADP in the presence of a proton or sodium gradient. F-type ATPases consist of two structural domains, F(1) containing the extramembraneous catalytic core and F(0) containing the membrane proton channel, linked together by a central stalk and a peripheral stalk. During catalysis, ATP synthesis in the catalytic domain of F(1) is coupled via a rotary mechanism of the central stalk subunits to proton translocation. Functionally, component of the F(0) channel, it forms part of the peripheral stalk, linking F(1) to F(0). The b'-subunit is a diverged and duplicated form of b found in plants and photosynthetic bacteria. This is ATP synthase subunit b 2 (atpF2) from Rhodopseudomonas palustris (strain ATCC BAA-98 / CGA009).